A 523-amino-acid chain; its full sequence is Peptide chain release factor 3 (523 aa).

The tr-type G domain occupies 10 to 277 (NKRRTFAIIS…QFVDLAPAPG (268 aa)). GTP is bound by residues 19-26 (SHPDAGKT), 87-91 (DTPGH), and 141-144 (NKLD).

The protein belongs to the TRAFAC class translation factor GTPase superfamily. Classic translation factor GTPase family. PrfC subfamily.

It is found in the cytoplasm. Functionally, increases the formation of ribosomal termination complexes and stimulates activities of RF-1 and RF-2. It binds guanine nucleotides and has strong preference for UGA stop codons. It may interact directly with the ribosome. The stimulation of RF-1 and RF-2 is significantly reduced by GTP and GDP, but not by GMP. This is Peptide chain release factor 3 from Lactobacillus delbrueckii subsp. bulgaricus (strain ATCC BAA-365 / Lb-18).